Reading from the N-terminus, the 443-residue chain is Autophagy-related protein 13 homolog (443 aa).

2 disordered regions span residues 232-283 (AKKR…EEDH) and 308-333 (ANGT…KEPT). Residues 240-253 (SVESATSAGSSTSR) are compositionally biased toward polar residues. Over residues 268–283 (EDSRHSDVQNSYEEDH) the composition is skewed to basic and acidic residues. Residues 308–325 (ANGTKKNSSSTCLNSPKS) are compositionally biased toward polar residues.

This sequence belongs to the ATG13 family. Metazoan subfamily. As to quaternary structure, interacts with unc-51 (via C-terminus). Interacts with lgg-1; the interaction is direct.

It is found in the cytoplasm. The protein resides in the cytosol. The protein localises to the preautophagosomal structure. It localises to the perikaryon. Its subcellular location is the cell projection. It is found in the axon. Component of the unc-51/atg-13 complex required for autophagosome formation. Required for the degradation of germ cell specific P-granule components such as sepa-1 by autophagy in somatic cells. This ensures exclusive localization of the P-granules in germ cells. May function downstream of the let-363 (Tor) signaling pathway to mediate sepa-1 degradation. Plays a role in survival during limited food availability. The chain is Autophagy-related protein 13 homolog from Caenorhabditis elegans.